Reading from the N-terminus, the 516-residue chain is Cytochrome P450 1A2 (516 aa).

A glycan (O-linked (GlcNAc) serine) is linked at Ser-69. Phe-226 provides a ligand contact to substrate. A heme-binding site is contributed by Cys-458.

The protein belongs to the cytochrome P450 family. As to quaternary structure, interacts with PGRMC1; the interaction requires PGRMC1 homodimerization. The cofactor is heme.

Its subcellular location is the endoplasmic reticulum membrane. The protein resides in the microsome membrane. It catalyses the reaction an organic molecule + reduced [NADPH--hemoprotein reductase] + O2 = an alcohol + oxidized [NADPH--hemoprotein reductase] + H2O + H(+). It carries out the reaction 17beta-estradiol + reduced [NADPH--hemoprotein reductase] + O2 = 2-hydroxy-17beta-estradiol + oxidized [NADPH--hemoprotein reductase] + H2O + H(+). The catalysed reaction is 17beta-estradiol + reduced [NADPH--hemoprotein reductase] + O2 = 4-hydroxy-17beta-estradiol + oxidized [NADPH--hemoprotein reductase] + H2O + H(+). The enzyme catalyses estrone + reduced [NADPH--hemoprotein reductase] + O2 = 2-hydroxyestrone + oxidized [NADPH--hemoprotein reductase] + H2O + H(+). It catalyses the reaction estrone + reduced [NADPH--hemoprotein reductase] + O2 = 4-hydroxyestrone + oxidized [NADPH--hemoprotein reductase] + H2O + H(+). It carries out the reaction cholesterol + reduced [NADPH--hemoprotein reductase] + O2 = 25-hydroxycholesterol + oxidized [NADPH--hemoprotein reductase] + H2O + H(+). The catalysed reaction is all-trans-retinol + reduced [NADPH--hemoprotein reductase] + O2 = all-trans-retinal + oxidized [NADPH--hemoprotein reductase] + 2 H2O + H(+). The enzyme catalyses all-trans-retinal + reduced [NADPH--hemoprotein reductase] + O2 = all-trans-retinoate + oxidized [NADPH--hemoprotein reductase] + H2O + 2 H(+). It catalyses the reaction (5Z,8Z,11Z,14Z)-eicosatetraenoate + reduced [NADPH--hemoprotein reductase] + O2 = (14R,15S)-epoxy-(5Z,8Z,11Z)-eicosatrienoate + oxidized [NADPH--hemoprotein reductase] + H2O + H(+). It carries out the reaction (5Z,8Z,11Z,14Z)-eicosatetraenoate + reduced [NADPH--hemoprotein reductase] + O2 = (14S,15R)-epoxy-(5Z,8Z,11Z)-eicosatrienoate + oxidized [NADPH--hemoprotein reductase] + H2O + H(+). The catalysed reaction is (5Z,8Z,11Z,14Z,17Z)-eicosapentaenoate + reduced [NADPH--hemoprotein reductase] + O2 = (17R,18S)-epoxy-(5Z,8Z,11Z,14Z)-eicosatetraenoate + oxidized [NADPH--hemoprotein reductase] + H2O + H(+). The enzyme catalyses (4Z,7Z,10Z,13Z,16Z,19Z)-docosahexaenoate + reduced [NADPH--hemoprotein reductase] + O2 = (19R,20S)-epoxy-(4Z,7Z,10Z,13Z,16Z)-docosapentaenoate + oxidized [NADPH--hemoprotein reductase] + H2O + H(+). It catalyses the reaction (5S)-hydroperoxy-(6E,8Z,11Z,14Z)-eicosatetraenoate = 5-oxo-(6E,8Z,11Z,14Z)-eicosatetraenoate + H2O. It carries out the reaction (12S)-hydroperoxy-(5Z,8Z,10E,14Z)-eicosatetraenoate = 12-oxo-(5Z,8Z,10E,14Z)-eicosatetraenoate + H2O. The catalysed reaction is (15S)-hydroperoxy-(5Z,8Z,11Z,13E)-eicosatetraenoate = 15-oxo-(5Z,8Z,11Z,13E)-eicosatetraenoate + H2O. The enzyme catalyses (13S)-hydroperoxy-(9Z,11E)-octadecadienoate = 13-oxo-(9Z,11E)-octadecadienoate + H2O. It catalyses the reaction (5Z,8Z,11Z,14Z)-eicosatetraenoate + reduced [NADPH--hemoprotein reductase] + O2 = 13-hydroxy-(5Z,8Z,11Z,14Z)-eicosatetraenoate + oxidized [NADPH--hemoprotein reductase] + H2O + H(+). It carries out the reaction (5Z,8Z,11Z,14Z)-eicosatetraenoate + reduced [NADPH--hemoprotein reductase] + O2 = 19-hydroxy-(5Z,8Z,11Z,14Z)-eicosatetraenoate + oxidized [NADPH--hemoprotein reductase] + H2O + H(+). The catalysed reaction is (9Z,12Z)-octadecadienoate + reduced [NADPH--hemoprotein reductase] + O2 = 11-hydroxy-(9Z,12Z)-octadecadienoate + oxidized [NADPH--hemoprotein reductase] + H2O + H(+). The protein operates within cofactor metabolism; retinol metabolism. It participates in steroid metabolism; cholesterol metabolism. It functions in the pathway lipid metabolism; arachidonate metabolism. In terms of biological role, a cytochrome P450 monooxygenase involved in the metabolism of various endogenous substrates, including fatty acids, steroid hormones and vitamins. Mechanistically, uses molecular oxygen inserting one oxygen atom into a substrate, and reducing the second into a water molecule, with two electrons provided by NADPH via cytochrome P450 reductase (NADPH--hemoprotein reductase). Catalyzes the hydroxylation of carbon-hydrogen bonds. Exhibits high catalytic activity for the formation of hydroxyestrogens from estrone (E1) and 17beta-estradiol (E2), namely 2-hydroxy E1 and E2. Metabolizes cholesterol toward 25-hydroxycholesterol, a physiological regulator of cellular cholesterol homeostasis. May act as a major enzyme for all-trans retinoic acid biosynthesis in the liver. Catalyzes two successive oxidative transformation of all-trans retinol to all-trans retinal and then to the active form all-trans retinoic acid. Primarily catalyzes stereoselective epoxidation of the last double bond of polyunsaturated fatty acids (PUFA), displaying a strong preference for the (R,S) stereoisomer. Catalyzes bisallylic hydroxylation and omega-1 hydroxylation of PUFA. May also participate in eicosanoids metabolism by converting hydroperoxide species into oxo metabolites (lipoxygenase-like reaction, NADPH-independent). Plays a role in the oxidative metabolism of xenobiotics. Catalyzes the N-hydroxylation of heterocyclic amines and the O-deethylation of phenacetin. Metabolizes caffeine via N3-demethylation. This chain is Cytochrome P450 1A2 (CYP1A2), found in Balaenoptera acutorostrata (Common minke whale).